The primary structure comprises 95 residues: Aspartyl/glutamyl-tRNA(Asn/Gln) amidotransferase subunit C (95 aa).

The protein belongs to the GatC family. In terms of assembly, heterotrimer of A, B and C subunits.

The enzyme catalyses L-glutamyl-tRNA(Gln) + L-glutamine + ATP + H2O = L-glutaminyl-tRNA(Gln) + L-glutamate + ADP + phosphate + H(+). The catalysed reaction is L-aspartyl-tRNA(Asn) + L-glutamine + ATP + H2O = L-asparaginyl-tRNA(Asn) + L-glutamate + ADP + phosphate + 2 H(+). In terms of biological role, allows the formation of correctly charged Asn-tRNA(Asn) or Gln-tRNA(Gln) through the transamidation of misacylated Asp-tRNA(Asn) or Glu-tRNA(Gln) in organisms which lack either or both of asparaginyl-tRNA or glutaminyl-tRNA synthetases. The reaction takes place in the presence of glutamine and ATP through an activated phospho-Asp-tRNA(Asn) or phospho-Glu-tRNA(Gln). The protein is Aspartyl/glutamyl-tRNA(Asn/Gln) amidotransferase subunit C of Chromohalobacter salexigens (strain ATCC BAA-138 / DSM 3043 / CIP 106854 / NCIMB 13768 / 1H11).